We begin with the raw amino-acid sequence, 215 residues long: Leucyl/phenylalanyl-tRNA--protein transferase (215 aa).

Belongs to the L/F-transferase family.

It is found in the cytoplasm. The catalysed reaction is N-terminal L-lysyl-[protein] + L-leucyl-tRNA(Leu) = N-terminal L-leucyl-L-lysyl-[protein] + tRNA(Leu) + H(+). It catalyses the reaction N-terminal L-arginyl-[protein] + L-leucyl-tRNA(Leu) = N-terminal L-leucyl-L-arginyl-[protein] + tRNA(Leu) + H(+). It carries out the reaction L-phenylalanyl-tRNA(Phe) + an N-terminal L-alpha-aminoacyl-[protein] = an N-terminal L-phenylalanyl-L-alpha-aminoacyl-[protein] + tRNA(Phe). Functionally, functions in the N-end rule pathway of protein degradation where it conjugates Leu, Phe and, less efficiently, Met from aminoacyl-tRNAs to the N-termini of proteins containing an N-terminal arginine or lysine. This is Leucyl/phenylalanyl-tRNA--protein transferase from Campylobacter jejuni subsp. jejuni serotype O:6 (strain 81116 / NCTC 11828).